A 139-amino-acid polypeptide reads, in one-letter code: Phosphoribosyl-AMP cyclohydrolase (139 aa).

Mg(2+) is bound at residue aspartate 91. Cysteine 92 contacts Zn(2+). Aspartate 93 and aspartate 95 together coordinate Mg(2+). Zn(2+)-binding residues include cysteine 110 and cysteine 117.

This sequence belongs to the PRA-CH family. Homodimer. Mg(2+) serves as cofactor. It depends on Zn(2+) as a cofactor.

The protein localises to the cytoplasm. It carries out the reaction 1-(5-phospho-beta-D-ribosyl)-5'-AMP + H2O = 1-(5-phospho-beta-D-ribosyl)-5-[(5-phospho-beta-D-ribosylamino)methylideneamino]imidazole-4-carboxamide. Its pathway is amino-acid biosynthesis; L-histidine biosynthesis; L-histidine from 5-phospho-alpha-D-ribose 1-diphosphate: step 3/9. Its function is as follows. Catalyzes the hydrolysis of the adenine ring of phosphoribosyl-AMP. The protein is Phosphoribosyl-AMP cyclohydrolase of Brucella abortus (strain S19).